A 147-amino-acid chain; its full sequence is Ponticulin-like protein C4 (147 aa).

The first 20 residues, 1-20, serve as a signal peptide directing secretion; that stretch reads MKFTKSLLLLIVAVFASSNA. N118 carries GPI-like-anchor amidated asparagine lipidation. N118 is a glycosylation site (N-linked (GlcNAc...) asparagine). Residues 119 to 147 constitute a propeptide, removed in mature form; that stretch reads SSESDSSDSTRIGASFALAAAALLSMIAL.

This sequence belongs to the ponticulin family. The GPI-like-anchor contains a phosphoceramide group, rather than a phosphatidyl group.

Its subcellular location is the cell membrane. The sequence is that of Ponticulin-like protein C4 (ponC4) from Dictyostelium discoideum (Social amoeba).